Reading from the N-terminus, the 439-residue chain is Homogentisate 1,2-dioxygenase (439 aa).

The Proton acceptor role is filled by His-293. Residues His-336 and Glu-342 each contribute to the Fe cation site. The homogentisate site is built by Tyr-351 and His-372. His-372 lines the Fe cation pocket.

The protein belongs to the homogentisate dioxygenase family. In terms of assembly, hexamer; dimer of trimers. Fe cation is required as a cofactor.

It catalyses the reaction homogentisate + O2 = 4-maleylacetoacetate + H(+). It participates in amino-acid degradation; L-phenylalanine degradation; acetoacetate and fumarate from L-phenylalanine: step 4/6. Involved in the catabolism of homogentisate (2,5-dihydroxyphenylacetate or 2,5-OH-PhAc), a central intermediate in the degradation of phenylalanine and tyrosine. Catalyzes the oxidative ring cleavage of the aromatic ring of homogentisate to yield maleylacetoacetate. This Cupriavidus pinatubonensis (strain JMP 134 / LMG 1197) (Cupriavidus necator (strain JMP 134)) protein is Homogentisate 1,2-dioxygenase.